We begin with the raw amino-acid sequence, 92 residues long: Small ribosomal subunit protein uS19c (92 aa).

This sequence belongs to the universal ribosomal protein uS19 family.

It localises to the plastid. The protein resides in the chloroplast. Its function is as follows. Protein S19 forms a complex with S13 that binds strongly to the 16S ribosomal RNA. The protein is Small ribosomal subunit protein uS19c of Chara vulgaris (Common stonewort).